Here is a 334-residue protein sequence, read N- to C-terminus: Aspartate carbamoyltransferase catalytic subunit (334 aa).

Residues Arg71 and Thr72 each coordinate carbamoyl phosphate. Lys99 is a binding site for L-aspartate. Carbamoyl phosphate-binding residues include Arg121, His151, and Gln154. Arg184 and Arg239 together coordinate L-aspartate. Residues Gly280 and Pro281 each coordinate carbamoyl phosphate.

It belongs to the aspartate/ornithine carbamoyltransferase superfamily. ATCase family. As to quaternary structure, heterododecamer (2C3:3R2) of six catalytic PyrB chains organized as two trimers (C3), and six regulatory PyrI chains organized as three dimers (R2).

The enzyme catalyses carbamoyl phosphate + L-aspartate = N-carbamoyl-L-aspartate + phosphate + H(+). It functions in the pathway pyrimidine metabolism; UMP biosynthesis via de novo pathway; (S)-dihydroorotate from bicarbonate: step 2/3. In terms of biological role, catalyzes the condensation of carbamoyl phosphate and aspartate to form carbamoyl aspartate and inorganic phosphate, the committed step in the de novo pyrimidine nucleotide biosynthesis pathway. The chain is Aspartate carbamoyltransferase catalytic subunit from Pseudomonas entomophila (strain L48).